The chain runs to 512 residues: SNF1-related protein kinase catalytic subunit alpha KIN11 (512 aa).

In terms of domain architecture, Protein kinase spans 20–272; that stretch reads YKLGKTLGIG…IPEIRQHRWF (253 aa). Residues 26–34 and lysine 49 contribute to the ATP site; that span reads LGIGSFGKV. Aspartate 143 serves as the catalytic Proton acceptor. Serine 165 is modified (phosphoserine). Threonine 176 bears the Phosphothreonine; by GRIK1 or GRIK2 mark. The interval 291–391 is auto-inhibitory domain (AID); it reads AKKINEEIVQ…GARSQVPVDR (101 aa). One can recognise a UBA domain in the interval 293–333; the sequence is KINEEIVQEVVNMGFDRNQVLESLRNRTQNDATVTYYLLLD. The regulatory domain (RD) stretch occupies residues 295-512; sequence NEEIVQEVVN…AAFLTELRVI (218 aa). Residues 392-512 form a PPI region; the sequence is KWALGLQSHA…AAFLTELRVI (121 aa). The tract at residues 399 to 512 is interaction with PAD1 and SKP1; that stretch reads SHAHPREIMN…AAFLTELRVI (114 aa). The region spanning 463 to 511 is the KA1 domain; sequence AMTSPTVIKFELQLYKAREEKYLLDIQRVNGPQFLFLDLCAAFLTELRV.

It belongs to the protein kinase superfamily. CAMK Ser/Thr protein kinase family. SNF1 subfamily. As to quaternary structure, subunit of a probable heterotrimeric complex consisting of an alpha catalytic (KIN10 or KIN11) subunit, and a beta (KINB) and a gamma (KING or SNF4) non-catalytic regulatory subunits. Interacts with KINB2, KINB3, SNF4 and probably with KINB1 and KING1. Interacts with SKP1/ASK1, PAD1 and the N-terminus of PRL1. Potential subunit of a SCF ubiquitin ligase complex consisting of a SNF1-related protein kinase, SKP1 and CUL1. The association of the SCF complex with the proteasome may be mediated by PAD1 and seems to be inhibited by the interaction with PRL1. Interacts with DSP4. Interacts with the begomovirus AL2 protein and the curtovirus L2 protein. Interacts with ATAF1. Interacts with CIPK14. Interacts with FLZ proteins through their FLZ-type zinc finger domains. Interacts with GEBP/STKR1. Interacts with REM4.1 and REM4.2. Interacts with ADK2. Interacts with IDD8. Interacts with FLZ3, FLZ9, TCP3, TCP13, HB21/ZHD3 and HB23/ZHD10. Interacts with WRI1. Interacts with IPK2b. Interacts with FLZ6 and FLZ10. Sumoylated by SIZ1. In terms of processing, phosphorylated at Thr-176 under submergence. Autophosphorylated. Phosphorylated at Thr-176 by GRIK1/SNAK2 and GRIK2/SNAK1. As to expression, expressed in roots, shoots, flower buds, flowers, siliques and leaves. Restrictly expressed to the base of the leaf, the vascular tissue, and the hydathodes.

It is found in the plastid. The protein localises to the chloroplast. It localises to the cytoplasm. The protein resides in the endoplasmic reticulum. It catalyses the reaction L-seryl-[protein] + ATP = O-phospho-L-seryl-[protein] + ADP + H(+). The enzyme catalyses L-threonyl-[protein] + ATP = O-phospho-L-threonyl-[protein] + ADP + H(+). With respect to regulation, inactivated by the begomovirus AL2 protein or the curtovirus L2 protein. Activated by phosphorylation at Thr-176 by GRIK1/SNAK2 and GRIK2/SNAK1. Inhibited by trehalose-6-phosphate. Its function is as follows. Catalytic subunit of the probable trimeric SNF1-related protein kinase (SnRK) complex, a central regulator of cellular energy homeostasis, which, in response to seemingly unrelated darkness, sugar and stress conditions, activates energy-producing pathways and inhibits energy-consuming processes. May play a role in a signal transduction cascade regulating gene expression and carbohydrate metabolism in higher plants. The SnRK complex may also be involved in the regulation of fatty acid synthesis by phosphorylation of acetyl-CoA carboxylase and in assimilation of nitrogen by phosphorylating nitrate reductase. In vitro, KIN11 exhibits kinase activity on sucrose phosphate synthase and the kinase activity is inhibited by PRL1. May be a subunit of a SCF ubiquitin ligase complex and thus be involved in proteasomal ubiquitination. Involved in innate antiviral defenses. Phosphorylates REM4.1 in vitro. Phosphorylates ADK2 in vitro. The polypeptide is SNF1-related protein kinase catalytic subunit alpha KIN11 (Arabidopsis thaliana (Mouse-ear cress)).